The primary structure comprises 259 residues: Glutamate racemase (259 aa).

Residues 7–8 (DS) and 39–40 (YG) each bind substrate. C70 acts as the Proton donor/acceptor in catalysis. A substrate-binding site is contributed by 71–72 (NT). The active-site Proton donor/acceptor is C180. A substrate-binding site is contributed by 181 to 182 (TH).

This sequence belongs to the aspartate/glutamate racemases family.

It carries out the reaction L-glutamate = D-glutamate. The protein operates within cell wall biogenesis; peptidoglycan biosynthesis. Its function is as follows. Provides the (R)-glutamate required for cell wall biosynthesis. The polypeptide is Glutamate racemase (Persephonella marina (strain DSM 14350 / EX-H1)).